The sequence spans 253 residues: Tryptophan synthase alpha chain (253 aa).

Active-site proton acceptor residues include Glu-47 and Asp-58.

This sequence belongs to the TrpA family. As to quaternary structure, tetramer of two alpha and two beta chains.

The catalysed reaction is (1S,2R)-1-C-(indol-3-yl)glycerol 3-phosphate + L-serine = D-glyceraldehyde 3-phosphate + L-tryptophan + H2O. The protein operates within amino-acid biosynthesis; L-tryptophan biosynthesis; L-tryptophan from chorismate: step 5/5. Its function is as follows. The alpha subunit is responsible for the aldol cleavage of indoleglycerol phosphate to indole and glyceraldehyde 3-phosphate. This is Tryptophan synthase alpha chain from Lactococcus lactis subsp. cremoris (strain MG1363).